Here is a 611-residue protein sequence, read N- to C-terminus: Leukotriene A-4 hydrolase (611 aa).

K73 bears the N6-acetyllysine mark. A peptide contacts are provided by residues 135–137 (QCQ) and 267–272 (PYGGME). Residue H296 participates in Zn(2+) binding. E297 serves as the catalytic Proton acceptor. The Zn(2+) site is built by H300 and E319. Position 337 is an N6-acetyllysine (K337). Y384 serves as the catalytic Proton donor. Position 414 is an N6-acetyllysine (K414). Residue S416 is modified to Phosphoserine. 564–566 (RMK) provides a ligand contact to a peptide. K573 carries the N6-acetyllysine modification.

The protein belongs to the peptidase M1 family. In terms of assembly, monomer. It depends on Zn(2+) as a cofactor. Post-translationally, phosphorylation at Ser-416 inhibits leukotriene-A4 hydrolase activity. activity.

The protein resides in the cytoplasm. It carries out the reaction leukotriene A4 + H2O = leukotriene B4. It catalyses the reaction (5S,6S)-epoxy-(18R)-hydroxy-(7E,9E,11Z,14Z,16E)-eicosapentaenoate + H2O = resolvin E1. The catalysed reaction is (5S,6S)-epoxy-(18S)-hydroxy-(7E,9E,11Z,14Z,16E)-eicosapentaenoate + H2O = 18S-resolvin E1. The enzyme catalyses Release of the N-terminal residue from a tripeptide.. It participates in lipid metabolism; leukotriene B4 biosynthesis. Inhibited by bestatin. The epoxide hydrolase activity is restrained by suicide inactivation that involves binding of LTA4 to Tyr-379. 4-(4-benzylphenyl)thiazol-2-amine (ARM1) selectively inhibits the epoxide hydrolase activity. Bifunctional zinc metalloenzyme that comprises both epoxide hydrolase (EH) and aminopeptidase activities. Acts as an epoxide hydrolase to catalyze the conversion of LTA4 to the pro-inflammatory mediator leukotriene B4 (LTB4). Also has aminopeptidase activity, with high affinity for N-terminal arginines of various synthetic tripeptides. In addition to its pro-inflammatory EH activity, may also counteract inflammation by its aminopeptidase activity, which inactivates by cleavage another neutrophil attractant, the tripeptide Pro-Gly-Pro (PGP), a bioactive fragment of collagen generated by the action of matrix metalloproteinase-9 (MMP9) and prolylendopeptidase (PREPL). Involved also in the biosynthesis of resolvin E1 and 18S-resolvin E1 from eicosapentaenoic acid, two lipid mediators that show potent anti-inflammatory and pro-resolving actions. This Bos taurus (Bovine) protein is Leukotriene A-4 hydrolase (LTA4H).